The following is a 323-amino-acid chain: NADH-ubiquinone oxidoreductase chain 1 (323 aa).

The next 8 helical transmembrane spans lie at 9-29, 76-96, 107-127, 145-165, 175-195, 227-247, 258-278, and 298-318; these read ILNP…LTLI, LFVL…PMPM, ILFV…SGWA, ISYE…SGGF, EATW…ISTL, LFFL…AVLF, EFTS…FLWV, and FLPL…ACAG.

It belongs to the complex I subunit 1 family.

The protein resides in the mitochondrion inner membrane. It carries out the reaction a ubiquinone + NADH + 5 H(+)(in) = a ubiquinol + NAD(+) + 4 H(+)(out). Core subunit of the mitochondrial membrane respiratory chain NADH dehydrogenase (Complex I) that is believed to belong to the minimal assembly required for catalysis. Complex I functions in the transfer of electrons from NADH to the respiratory chain. The immediate electron acceptor for the enzyme is believed to be ubiquinone. The chain is NADH-ubiquinone oxidoreductase chain 1 (MT-ND1) from Gadus morhua (Atlantic cod).